A 577-amino-acid chain; its full sequence is Proline--tRNA ligase (577 aa).

The protein belongs to the class-II aminoacyl-tRNA synthetase family. ProS type 1 subfamily. In terms of assembly, homodimer.

It localises to the cytoplasm. The enzyme catalyses tRNA(Pro) + L-proline + ATP = L-prolyl-tRNA(Pro) + AMP + diphosphate. In terms of biological role, catalyzes the attachment of proline to tRNA(Pro) in a two-step reaction: proline is first activated by ATP to form Pro-AMP and then transferred to the acceptor end of tRNA(Pro). As ProRS can inadvertently accommodate and process non-cognate amino acids such as alanine and cysteine, to avoid such errors it has two additional distinct editing activities against alanine. One activity is designated as 'pretransfer' editing and involves the tRNA(Pro)-independent hydrolysis of activated Ala-AMP. The other activity is designated 'posttransfer' editing and involves deacylation of mischarged Ala-tRNA(Pro). The misacylated Cys-tRNA(Pro) is not edited by ProRS. This is Proline--tRNA ligase from Helicobacter pylori (strain Shi470).